Reading from the N-terminus, the 160-residue chain is Small ribosomal subunit protein uS7 (160 aa).

This sequence belongs to the universal ribosomal protein uS7 family. Part of the 30S ribosomal subunit. Contacts proteins S9 and S11.

In terms of biological role, one of the primary rRNA binding proteins, it binds directly to 16S rRNA where it nucleates assembly of the head domain of the 30S subunit. Is located at the subunit interface close to the decoding center, probably blocks exit of the E-site tRNA. This is Small ribosomal subunit protein uS7 from Rickettsia prowazekii (strain Madrid E).